We begin with the raw amino-acid sequence, 414 residues long: Lipoyl synthase, mitochondrial (414 aa).

Residues 1-18 constitute a mitochondrion transit peptide; that stretch reads MYRRSVGVLFVGRNTRWI. The span at 51–67 shows a compositional bias: polar residues; it reads GNSTEVENATSQLTGTS. The interval 51–75 is disordered; it reads GNSTEVENATSQLTGTSGKRRKGNR. Residues C150, C155, C161, C181, C185, C188, and S396 each coordinate [4Fe-4S] cluster. In terms of domain architecture, Radical SAM core spans 164–385; the sequence is GKDKSKATAT…KERALEMGFL (222 aa).

It belongs to the radical SAM superfamily. Lipoyl synthase family. The cofactor is [4Fe-4S] cluster.

The protein resides in the mitochondrion. It carries out the reaction [[Fe-S] cluster scaffold protein carrying a second [4Fe-4S](2+) cluster] + N(6)-octanoyl-L-lysyl-[protein] + 2 oxidized [2Fe-2S]-[ferredoxin] + 2 S-adenosyl-L-methionine + 4 H(+) = [[Fe-S] cluster scaffold protein] + N(6)-[(R)-dihydrolipoyl]-L-lysyl-[protein] + 4 Fe(3+) + 2 hydrogen sulfide + 2 5'-deoxyadenosine + 2 L-methionine + 2 reduced [2Fe-2S]-[ferredoxin]. It participates in protein modification; protein lipoylation via endogenous pathway; protein N(6)-(lipoyl)lysine from octanoyl-[acyl-carrier-protein]: step 2/2. Its function is as follows. Catalyzes the radical-mediated insertion of two sulfur atoms into the C-6 and C-8 positions of the octanoyl moiety bound to the lipoyl domains of lipoate-dependent enzymes, thereby converting the octanoylated domains into lipoylated derivatives. The sequence is that of Lipoyl synthase, mitochondrial from Saccharomyces cerevisiae (strain RM11-1a) (Baker's yeast).